The following is a 652-amino-acid chain: WD repeat-containing protein 70 (652 aa).

Disordered regions lie at residues 1 to 22 (MERP…LAVT) and 45 to 171 (RRTA…IPDS). Positions 45–76 (RRTAVERSRKTLEAREREEEMNREKELRRQNE) are enriched in basic and acidic residues. The segment covering 92-102 (SKSSSRDTSSS) has biased composition (low complexity). 2 stretches are compositionally biased toward acidic residues: residues 103–115 (ESDE…DDEL) and 146–162 (EDVE…EEEE). WD repeat units follow at residues 178–217 (HGTK…ASFK), 225–266 (CECH…ECIK), 279–319 (GHTA…KQKS), 328–367 (GKKV…HPKF), 374–413 (DPGT…KPLF), 419–464 (PTMF…RVYE), and 467–506 (ITDA…QRGA). A Glycyl lysine isopeptide (Lys-Gly) (interchain with G-Cter in SUMO2) cross-link involves residue Lys294. Lys450 carries the N6-acetyllysine modification. Residues 538 to 563 (REPRQRSTRKQLEKDRLDPLKSHKPE) show a composition bias toward basic and acidic residues. The segment at 538-577 (REPRQRSTRKQLEKDRLDPLKSHKPEPPVAGPGRGGRVGT) is disordered. The residue at position 577 (Thr577) is a Phosphothreonine. Glycyl lysine isopeptide (Lys-Gly) (interchain with G-Cter in SUMO2) cross-links involve residues Lys588 and Lys594. Ser619 and Ser636 each carry phosphoserine. The segment at 629–652 (TMFAQVESDDEETKNEPEWKKRKI) is disordered. Basic and acidic residues predominate over residues 642–652 (KNEPEWKKRKI).

This sequence belongs to the WD repeat GAD-1 family.

The chain is WD repeat-containing protein 70 (WDR70) from Bos taurus (Bovine).